Here is a 264-residue protein sequence, read N- to C-terminus: 3-methyl-2-oxobutanoate hydroxymethyltransferase (264 aa).

Residues Asp-45 and Asp-84 each contribute to the Mg(2+) site. 3-methyl-2-oxobutanoate-binding positions include 45–46 (DS), Asp-84, and Lys-112. Position 114 (Glu-114) interacts with Mg(2+). Glu-181 serves as the catalytic Proton acceptor.

The protein belongs to the PanB family. As to quaternary structure, homodecamer; pentamer of dimers. It depends on Mg(2+) as a cofactor.

The protein localises to the cytoplasm. It catalyses the reaction 3-methyl-2-oxobutanoate + (6R)-5,10-methylene-5,6,7,8-tetrahydrofolate + H2O = 2-dehydropantoate + (6S)-5,6,7,8-tetrahydrofolate. It participates in cofactor biosynthesis; (R)-pantothenate biosynthesis; (R)-pantoate from 3-methyl-2-oxobutanoate: step 1/2. Its function is as follows. Catalyzes the reversible reaction in which hydroxymethyl group from 5,10-methylenetetrahydrofolate is transferred onto alpha-ketoisovalerate to form ketopantoate. The protein is 3-methyl-2-oxobutanoate hydroxymethyltransferase of Vibrio cholerae serotype O1 (strain ATCC 39541 / Classical Ogawa 395 / O395).